Here is a 200-residue protein sequence, read N- to C-terminus: uncharacterized protein (200 aa).

Functionally, involved in osmoadaptation. This is an uncharacterized protein from Emericella nidulans (strain FGSC A4 / ATCC 38163 / CBS 112.46 / NRRL 194 / M139) (Aspergillus nidulans).